The following is a 383-amino-acid chain: Pentatricopeptide repeat-containing protein 2, mitochondrial (383 aa).

Residues 161–195 (TSFNILMDMLFIKGKYKSALEVLIEMKNQNVKFTT) form a PPR repeat. S377 carries the post-translational modification Phosphoserine.

It belongs to the PTCD2 family.

The protein localises to the mitochondrion. In terms of biological role, involved in mitochondrial RNA maturation and mitochondrial respiratory chain function. The protein is Pentatricopeptide repeat-containing protein 2, mitochondrial (PTCD2) of Pongo abelii (Sumatran orangutan).